The following is a 151-amino-acid chain: MLP-like protein 328 (151 aa).

Belongs to the MLP family.

The sequence is that of MLP-like protein 328 (MLP328) from Arabidopsis thaliana (Mouse-ear cress).